A 121-amino-acid polypeptide reads, in one-letter code: Small ribosomal subunit protein uS13 (121 aa).

A disordered region spans residues 97–121 (VRGQRTRTNARTRRGARKTVAGKKK). Over residues 100–121 (QRTRTNARTRRGARKTVAGKKK) the composition is skewed to basic residues.

It belongs to the universal ribosomal protein uS13 family. In terms of assembly, part of the 30S ribosomal subunit. Forms a loose heterodimer with protein S19. Forms two bridges to the 50S subunit in the 70S ribosome.

Its function is as follows. Located at the top of the head of the 30S subunit, it contacts several helices of the 16S rRNA. In the 70S ribosome it contacts the 23S rRNA (bridge B1a) and protein L5 of the 50S subunit (bridge B1b), connecting the 2 subunits; these bridges are implicated in subunit movement. Contacts the tRNAs in the A and P-sites. This Prochlorococcus marinus (strain MIT 9313) protein is Small ribosomal subunit protein uS13.